Reading from the N-terminus, the 198-residue chain is 7-methyl-GTP pyrophosphatase (198 aa).

The active-site Proton acceptor is the aspartate 75.

It belongs to the Maf family. YceF subfamily. It depends on a divalent metal cation as a cofactor.

The protein resides in the cytoplasm. The catalysed reaction is N(7)-methyl-GTP + H2O = N(7)-methyl-GMP + diphosphate + H(+). Nucleoside triphosphate pyrophosphatase that hydrolyzes 7-methyl-GTP (m(7)GTP). May have a dual role in cell division arrest and in preventing the incorporation of modified nucleotides into cellular nucleic acids. In Nitrosospira multiformis (strain ATCC 25196 / NCIMB 11849 / C 71), this protein is 7-methyl-GTP pyrophosphatase.